The following is a 76-amino-acid chain: Protein OPG128 (76 aa).

A disulfide bridge links Cys17 with Cys21.

This sequence belongs to the orthopoxvirus OPG128 family. In terms of assembly, interacts with sulfhydryl oxidase OPG072; this interaction involves formation of a transient disulfide-bonded intermediate, allowing disulfide bond transfer. Interacts with OPG088; this interaction involves formation of a transient disulfide-bonded intermediate, allowing disulfide bond transfer.

In terms of biological role, late protein which probably participates in disulfide bond formation by functioning as a thiol-disulfide transfer protein between membrane-associated OPG072 and OPG08. The complete pathway for formation of disulfide bonds in intracellular virion membrane proteins sequentially involves oxidation of OPG072, OPG128 and OPG08. The polypeptide is Protein OPG128 (OPG128) (Homo sapiens (Human)).